We begin with the raw amino-acid sequence, 329 residues long: Replication factor C small subunit 1 (329 aa).

ATP is bound at residue 44–51 (GPPGTGKT).

This sequence belongs to the activator 1 small subunits family. RfcS subfamily. As to quaternary structure, heteromultimer composed of small subunits (RfcS) and large subunits (RfcL).

Functionally, part of the RFC clamp loader complex which loads the PCNA sliding clamp onto DNA. The sequence is that of Replication factor C small subunit 1 from Pyrobaculum aerophilum (strain ATCC 51768 / DSM 7523 / JCM 9630 / CIP 104966 / NBRC 100827 / IM2).